The chain runs to 427 residues: 3-phosphoshikimate 1-carboxyvinyltransferase (427 aa).

Positions 22, 23, and 27 each coordinate 3-phosphoshikimate. K22 is a phosphoenolpyruvate binding site. 2 residues coordinate phosphoenolpyruvate: G96 and R124. Positions 169, 170, 171, 197, 313, 336, and 340 each coordinate 3-phosphoshikimate. Residue Q171 coordinates phosphoenolpyruvate. The Proton acceptor role is filled by D313. Phosphoenolpyruvate contacts are provided by R344, R386, and K411.

It belongs to the EPSP synthase family. As to quaternary structure, monomer.

The protein localises to the cytoplasm. It catalyses the reaction 3-phosphoshikimate + phosphoenolpyruvate = 5-O-(1-carboxyvinyl)-3-phosphoshikimate + phosphate. It participates in metabolic intermediate biosynthesis; chorismate biosynthesis; chorismate from D-erythrose 4-phosphate and phosphoenolpyruvate: step 6/7. In terms of biological role, catalyzes the transfer of the enolpyruvyl moiety of phosphoenolpyruvate (PEP) to the 5-hydroxyl of shikimate-3-phosphate (S3P) to produce enolpyruvyl shikimate-3-phosphate and inorganic phosphate. This Escherichia coli O127:H6 (strain E2348/69 / EPEC) protein is 3-phosphoshikimate 1-carboxyvinyltransferase.